Here is a 196-residue protein sequence, read N- to C-terminus: UPF0134 protein MPN_501 (196 aa).

It belongs to the UPF0134 family.

This chain is UPF0134 protein MPN_501, found in Mycoplasma pneumoniae (strain ATCC 29342 / M129 / Subtype 1) (Mycoplasmoides pneumoniae).